We begin with the raw amino-acid sequence, 481 residues long: Neuronal acetylcholine receptor subunit eat-2 (481 aa).

An N-terminal signal peptide occupies residues 1-19; that stretch reads MFLLLQILYILLFLNLADT. The Extracellular segment spans residues 20 to 235; the sequence is SDDEYRLLKD…MHLKRRTMYY (216 aa). Residue Asn-93 is glycosylated (N-linked (GlcNAc...) asparagine). A disulfide bridge links Cys-147 with Cys-161. 3 helical membrane passes run 236–256, 264–284, and 292–312; these read GLNWIIPSILISLSNILGFTM, VTLQITNFLSIMVFLAMVSEV, and IPIIAAFFSFAIVILGVSICV. Residues 313–443 lie on the Cytoplasmic side of the membrane; it reads SLITVNIFYR…WRFMAMVIDR (131 aa). The disordered stretch occupies residues 356–384; sequence KPKREKKKEEEEDEESNAGGKEEESELIS. Residues 444–464 traverse the membrane as a helical segment; sequence ASLFLFTGLIFGTTFVIFAAC.

It belongs to the ligand-gated ion channel (TC 1.A.9) family. Acetylcholine receptor (TC 1.A.9.1) subfamily. In terms of assembly, neuronal AChR seems to be composed of two different type of subunits: alpha and beta.

It is found in the postsynaptic cell membrane. The protein resides in the cell membrane. Functionally, after binding acetylcholine, the AChR responds by an extensive change in conformation that affects all subunits and leads to opening of an ion-conducting channel across the plasma membrane. Nicotinic acetylcholine receptor in the MC pharyngeal motor neuron involved in pharyngeal pumping. Has a role in the determination of life span possibly via calorific restriction which affects growth rate, although this is independent of metabolic activity. The protein is Neuronal acetylcholine receptor subunit eat-2 of Caenorhabditis briggsae.